The following is a 75-amino-acid chain: Serine rich endogenous peptide 4 (75 aa).

A signal peptide spans 1–31; sequence MATKTSNLGHLLLSLFILLLFILSQVGVAQA. The tract at residues 51–75 is disordered; the sequence is PPPLRGIVKPPIASFHSASPKDKGP. Residues 61–75 carry the SCOOP motif motif; that stretch reads PIASFHSASPKDKGP. A SxS motif essential for MIK2 binding motif is present at residues 67–69; it reads SAS.

This sequence belongs to the serine rich endogenous peptide (SCOOP) phytocytokine family. As to quaternary structure, interacts with MIK2 (via extracellular leucine-rich repeat domain); this interaction triggers the formation of complex between MIK2 and the BAK1/SERK3 and SERK4 coreceptors, and subsequent BAK1 activation by phosphorylation. In terms of tissue distribution, mostly expressed in leaves and seedlings shoots, and, to a lower extent, in roots, stems, siliques, seeds and flowers.

The protein resides in the cell membrane. The protein localises to the secreted. It localises to the extracellular space. It is found in the apoplast. Functionally, brassicaceae-specific phytocytokine (plant endogenous peptide released into the apoplast) perceived by MIK2 in a BAK1/SERK3 and SERK4 coreceptors-dependent manner, that modulates various physiological and antimicrobial processes including growth prevention and reactive oxygen species (ROS) response regulation. Inhibits root growth. Prevents general growth and development. Exhibits antibacterial effects against Pseudomonas syringae pv. tomato DC3000, Ralstonia solanacearum, Bacillus subtilis and Agrobacterium tumefaciens, thus being an antimicrobial peptide (AMP). The chain is Serine rich endogenous peptide 4 from Arabidopsis thaliana (Mouse-ear cress).